The sequence spans 494 residues: Cysteine--tRNA ligase (494 aa).

Residue C29 participates in Zn(2+) binding. The 'HIGH' region motif lies at 31–41 (VTVYDHCHIGH). Zn(2+) is bound by residues C209, H234, and E238. A 'KMSKS' region motif is present at residues 266-270 (KMSKS). K269 lines the ATP pocket.

It belongs to the class-I aminoacyl-tRNA synthetase family. In terms of assembly, monomer. Zn(2+) serves as cofactor.

It localises to the cytoplasm. It carries out the reaction tRNA(Cys) + L-cysteine + ATP = L-cysteinyl-tRNA(Cys) + AMP + diphosphate. In Geotalea uraniireducens (strain Rf4) (Geobacter uraniireducens), this protein is Cysteine--tRNA ligase.